We begin with the raw amino-acid sequence, 297 residues long: Acetylglutamate kinase (297 aa).

Residues 64–65 (GG), Arg-86, and Asn-190 contribute to the substrate site.

This sequence belongs to the acetylglutamate kinase family. ArgB subfamily.

It is found in the cytoplasm. The enzyme catalyses N-acetyl-L-glutamate + ATP = N-acetyl-L-glutamyl 5-phosphate + ADP. It participates in amino-acid biosynthesis; L-arginine biosynthesis; N(2)-acetyl-L-ornithine from L-glutamate: step 2/4. In terms of biological role, catalyzes the ATP-dependent phosphorylation of N-acetyl-L-glutamate. This is Acetylglutamate kinase from Solidesulfovibrio magneticus (strain ATCC 700980 / DSM 13731 / RS-1) (Desulfovibrio magneticus).